The chain runs to 916 residues: MGDARDLCPHLDCIGEVTKEDLLLKSKGTCQSCGVAGPNLWACLQVTCPYVGCGESFADHSSIHAQVKKHNLTVNLTTFRVWCYACEREVFLEQRLAVHLASSSARLSEQDSPPPSHPLKAVPIAVADEGESESEDDDLKPRGLTGMKNLGNSCYMNAALQALSNCPPLTQFFLECGGLVRTDKKPALCKSYQKLISEVWHKKRPSYVVPTSLSHGIKLVNPMFRGYAQQDTQEFLRCLMDQLHEELKEPMVAAVAALTDARDSDSSDTDERRDGDRSPSEDEFLSCDSSSDRGEGDGQGRGGGSSKAEMELLISDEAGRAISEKERMKDRKFSWGQQRTNSEQVDEDADVDTAMASLDEQSREAQPPSPRSTSPCQTPEPDNEAHIRSSSRPCSPVHHHHEGHSKLSSSPPRASPVRMGPSYVLKKAQVPSTGGRRRKEQSYRSVISDVFNGSVLSLVQCLTCDRVSTTVETFQDLSLPIPGKEDLAKLHSAIYQNVPAKPGACGDSYSSQGWLAFIVEYIRRFVVSCTPSWFWGPVVTLEDCLAAFFAADELKGDNMYSCERCKKLRNGVKYCKVLCLPEILCVHLKRFRHEVMYSFKVSSHVSFPLEGLDLRPFLAKECTSQVTTYDLLSVICHHGTAGSGHYIAYCQNVINGQWYEFDDQYVTEVHETVVQNVEAYVLFYRKSSEEAMRERQQVVSLAAMREPSLLRFYVSREWLNKFNTFAEPGPITNHTFLCSHGGIPPNKYHYIDDLVVILPQSVWEHLYSRFGGGPAVNHLYVCSICQVEIEALAKRRRVEIDTFIKLNKAFQAEESPAVIYCISMHWFREWEAFVKGKDSEPPGPIDNSRIAQVKGSGHIQLKQGADCGQISEETWTYLSSLYGGGPEIAIRQSVAQLPDPESLHGEQKIEAETRAL.

The UBP-type zinc-finger motif lies at 6 to 111 (DLCPHLDCIG…SSSARLSEQD (106 aa)). 12 residues coordinate Zn(2+): Cys-8, His-10, Cys-30, Cys-33, Cys-43, Cys-48, Cys-53, His-60, His-64, His-70, Cys-83, and Cys-86. Ser-112, Ser-132, and Ser-134 each carry phosphoserine. Positions 145 to 687 (TGMKNLGNSC…EAYVLFYRKS (543 aa)) constitute a USP domain. The active-site Nucleophile is Cys-154. The interval 258–420 (LTDARDSDSS…PPRASPVRMG (163 aa)) is disordered. A Phosphothreonine modification is found at Thr-259. Residues 260–280 (DARDSDSSDTDERRDGDRSPS) are compositionally biased toward basic and acidic residues. Ser-306 bears the Phosphoserine mark. Residues 317-333 (EAGRAISEKERMKDRKF) are compositionally biased toward basic and acidic residues. A Phosphoserine modification is found at Ser-369. A Phosphothreonine modification is found at Thr-378. Residues Ser-410 and Ser-415 each carry the phosphoserine modification. Catalysis depends on His-645, which acts as the Proton acceptor. 2 DUSP domains span residues 689–782 (EEAM…LYVC) and 791–894 (ALAK…RQSV).

Belongs to the peptidase C19 family. USP20/USP33 subfamily. Interacts with VHL, leading to its ubiquitination and subsequent degradation. Interacts with CCP110. Interacts with DIO2. Interacts with HIF1A. Interacts with ADRB2. Interacts with USP18. In terms of processing, ubiquitinated via a VHL-dependent pathway for proteasomal degradation.

The protein resides in the cytoplasm. It is found in the endoplasmic reticulum. It localises to the perinuclear region. The protein localises to the cytoskeleton. Its subcellular location is the microtubule organizing center. The protein resides in the centrosome. The catalysed reaction is Thiol-dependent hydrolysis of ester, thioester, amide, peptide and isopeptide bonds formed by the C-terminal Gly of ubiquitin (a 76-residue protein attached to proteins as an intracellular targeting signal).. Deubiquitinating enzyme that plays a role in many cellular processes including autophagy, cellular antiviral response or membrane protein biogenesis. Attenuates TLR4-mediated NF-kappa-B signaling by cooperating with beta-arrestin-2/ARRB2 and inhibiting TRAF6 autoubiquitination. Promotes cellular antiviral responses by deconjugating 'Lys-33' and 'Lys-48'-linked ubiquitination of STING1 leading to its stabilization. Plays an essential role in autophagy induction by regulating the ULK1 stability through deubiquitination of ULK1. Acts as a positive regulator for NF-kappa-B activation by TNF-alpha through deubiquitinating 'Lys-48'-linked polyubiquitination of SQSTM1, leading to its increased stability. Acts as a regulator of G-protein coupled receptor (GPCR) signaling by mediating the deubiquitination beta-2 adrenergic receptor (ADRB2). Plays a central role in ADRB2 recycling and resensitization after prolonged agonist stimulation by constitutively binding ADRB2, mediating deubiquitination of ADRB2 and inhibiting lysosomal trafficking of ADRB2. Upon dissociation, it is probably transferred to the translocated beta-arrestins, possibly leading to beta-arrestins deubiquitination and disengagement from ADRB2. This suggests the existence of a dynamic exchange between the ADRB2 and beta-arrestins. Deubiquitinates DIO2, thereby regulating thyroid hormone regulation. Deubiquitinates HIF1A, leading to stabilize HIF1A and enhance HIF1A-mediated activity. Deubiquitinates MCL1, a pivotal member of the anti-apoptotic Bcl-2 protein family to regulate its stability. Within the endoplasmic reticulum, participates with USP33 in the rescue of post-translationally targeted membrane proteins that are inappropriately ubiquitinated by the cytosolic protein quality control in the cytosol. The polypeptide is Ubiquitin carboxyl-terminal hydrolase 20 (Usp20) (Mus musculus (Mouse)).